The chain runs to 1167 residues: Chromosome partition protein Smc (1167 aa).

Residue 32-39 (PNGCGKSN) participates in ATP binding. 5 coiled-coil regions span residues 170 to 274 (ISKY…RIET), 310 to 390 (QREL…HNRD), 468 to 500 (GLQE…LETL), 653 to 870 (ALLR…ERAL), and 982 to 1011 (EYLD…ETRG).

It belongs to the SMC family. As to quaternary structure, homodimer.

It is found in the cytoplasm. Functionally, required for chromosome condensation and partitioning. This Xanthomonas oryzae pv. oryzae (strain KACC10331 / KXO85) protein is Chromosome partition protein Smc.